Consider the following 402-residue polypeptide: mRNA cap guanine-N(7) methyltransferase (402 aa).

Over residues Met1–Val11 the composition is skewed to basic and acidic residues. The disordered stretch occupies residues Met1–Leu75. Residues Pro35 to Ser50 show a composition bias toward polar residues. The segment covering Lys55–His72 has biased composition (basic and acidic residues). In terms of domain architecture, mRNA cap 0 methyltransferase spans Ser94–Gln401. MRNA is bound at residue Asn103–Asn104. Residues Lys107, Gly131, Asp153, Asp187, Gln210, and Tyr215 each contribute to the S-adenosyl-L-methionine site.

This sequence belongs to the class I-like SAM-binding methyltransferase superfamily. mRNA cap 0 methyltransferase family.

It is found in the nucleus. The enzyme catalyses a 5'-end (5'-triphosphoguanosine)-ribonucleoside in mRNA + S-adenosyl-L-methionine = a 5'-end (N(7)-methyl 5'-triphosphoguanosine)-ribonucleoside in mRNA + S-adenosyl-L-homocysteine. In terms of biological role, catalytic subunit of the mRNA-capping methyltransferase RNMT:RAMAC complex that methylates the N7 position of the added guanosine to the 5'-cap structure of mRNAs. Binds RNA containing 5'-terminal GpppC. This is mRNA cap guanine-N(7) methyltransferase (rnmt) from Xenopus laevis (African clawed frog).